The primary structure comprises 531 residues: Conglutin beta 1 (531 aa).

Positions 1–30 are cleaved as a signal peptide; the sequence is MGKMRVRFPTLVLVLGIVFLMAVSIGIAYG. Residues 31 to 108 constitute a propeptide that is removed on maturation; it reads EKDVLKSHER…EQQQGSPSYS (78 aa). Basic and acidic residues-rich tracts occupy residues 37–51 and 79–99; these read SHER…EWQP and SGYE…REQE. Disordered regions lie at residues 37–124, 283–302, and 314–337; these read SHER…RFQT, QEYE…EGVI, and TKYA…LRSN. A Cupin type-1 1 domain is found at 115 to 273; the sequence is YHFNSQRFQT…TFNTRYEEIQ (159 aa). A compositionally biased stretch (basic and acidic residues) spans 286–302; it reads EEQRRGQEQSHQDEGVI. Polar residues predominate over residues 316–337; sequence YAQSSSGKDKPSQSGPFNLRSN. Positions 332-494 constitute a Cupin type-1 2 domain; it reads FNLRSNEPIY…TFPGSAEDIE (163 aa). The N-linked (GlcNAc...) asparagine glycan is linked to N444. The segment at 508 to 531 is disordered; sequence ALPQQQQQSEKEGRRGRRGPISSI.

It belongs to the 7S seed storage protein family.

In terms of biological role, seed storage protein. Accumulates during seed development and is hydrolyzed after germination to provide a carbon and nitrogen source for the developing seedling. Has a lectin-like activity. This chain is Conglutin beta 1, found in Lupinus albus (White lupine).